We begin with the raw amino-acid sequence, 248 residues long: 2,3-bisphosphoglycerate-dependent phosphoglycerate mutase (248 aa).

Substrate-binding positions include 8–15, 21–22, arginine 60, 87–90, lysine 98, 114–115, and 183–184; these read RHGESTWN, TG, EKHY, RR, and GN. Histidine 9 functions as the Tele-phosphohistidine intermediate in the catalytic mechanism. Glutamate 87 (proton donor/acceptor) is an active-site residue.

This sequence belongs to the phosphoglycerate mutase family. BPG-dependent PGAM subfamily.

The enzyme catalyses (2R)-2-phosphoglycerate = (2R)-3-phosphoglycerate. It participates in carbohydrate degradation; glycolysis; pyruvate from D-glyceraldehyde 3-phosphate: step 3/5. Its function is as follows. Catalyzes the interconversion of 2-phosphoglycerate and 3-phosphoglycerate. This is 2,3-bisphosphoglycerate-dependent phosphoglycerate mutase from Elusimicrobium minutum (strain Pei191).